Here is a 144-residue protein sequence, read N- to C-terminus: Large ribosomal subunit protein uL13 (144 aa).

This sequence belongs to the universal ribosomal protein uL13 family. As to quaternary structure, part of the 50S ribosomal subunit.

Its function is as follows. This protein is one of the early assembly proteins of the 50S ribosomal subunit, although it is not seen to bind rRNA by itself. It is important during the early stages of 50S assembly. This chain is Large ribosomal subunit protein uL13, found in Desulfovibrio desulfuricans (strain ATCC 27774 / DSM 6949 / MB).